A 179-amino-acid chain; its full sequence is Large ribosomal subunit protein uL5 (179 aa).

Belongs to the universal ribosomal protein uL5 family. As to quaternary structure, part of the 50S ribosomal subunit; part of the 5S rRNA/L5/L18/L25 subcomplex. Contacts the 5S rRNA and the P site tRNA. Forms a bridge to the 30S subunit in the 70S ribosome.

This is one of the proteins that bind and probably mediate the attachment of the 5S RNA into the large ribosomal subunit, where it forms part of the central protuberance. In the 70S ribosome it contacts protein S13 of the 30S subunit (bridge B1b), connecting the 2 subunits; this bridge is implicated in subunit movement. Contacts the P site tRNA; the 5S rRNA and some of its associated proteins might help stabilize positioning of ribosome-bound tRNAs. The polypeptide is Large ribosomal subunit protein uL5 (Desulfotalea psychrophila (strain LSv54 / DSM 12343)).